The following is a 592-amino-acid chain: Aspartate--tRNA(Asp/Asn) ligase (592 aa).

Glu-173 is a binding site for L-aspartate. Positions 197–200 (QLFK) are aspartate. Arg-219 is an L-aspartate binding site. ATP is bound by residues 219 to 221 (RDE) and Gln-228. An L-aspartate-binding site is contributed by His-448. Glu-481 lines the ATP pocket. Residue Arg-488 participates in L-aspartate binding. An ATP-binding site is contributed by 533 to 536 (GLDR).

This sequence belongs to the class-II aminoacyl-tRNA synthetase family. Type 1 subfamily. As to quaternary structure, homodimer.

The protein resides in the cytoplasm. It carries out the reaction tRNA(Asx) + L-aspartate + ATP = L-aspartyl-tRNA(Asx) + AMP + diphosphate. In terms of biological role, aspartyl-tRNA synthetase with relaxed tRNA specificity since it is able to aspartylate not only its cognate tRNA(Asp) but also tRNA(Asn). Reaction proceeds in two steps: L-aspartate is first activated by ATP to form Asp-AMP and then transferred to the acceptor end of tRNA(Asp/Asn). The chain is Aspartate--tRNA(Asp/Asn) ligase from Chromohalobacter salexigens (strain ATCC BAA-138 / DSM 3043 / CIP 106854 / NCIMB 13768 / 1H11).